Here is a 585-residue protein sequence, read N- to C-terminus: Serine protease HtrA-like (585 aa).

Residues 1 to 184 (MDNNKKQVIP…QPKDKDNDNT (184 aa)) form a disordered region. Over residues 21–82 (YFHNVEREER…IHQQRDDKSY (62 aa)) the composition is skewed to basic and acidic residues. Positions 84-94 (QKTLNQNNQMN) are enriched in polar residues. Residues 95-113 (KSKDDDNKIGEESLHDVRV) are compositionally biased toward basic and acidic residues. Residues 114 to 124 (SSDTSTLPHQN) show a composition bias toward polar residues. Over residues 126–139 (SIKDYDDSGNESKQ) the composition is skewed to basic and acidic residues. A compositionally biased stretch (polar residues) spans 151–175 (GVNSNHTEQDSRSTQPYSSKHSYSQ). The chain crosses the membrane as a helical span at residues 224–244 (MLIIIGIIVLLLILNAIFTTV). Residues His-320, Asp-350, and Ser-435 each act as charge relay system in the active site. A PDZ domain is found at 516–575 (GVLIGEVKENGLGDKAGLKKGDVIVELDGKKIEDNLRYRQVIYSHYDDQKTITAKIYRNG).

It belongs to the peptidase S1C family.

It localises to the cell membrane. This Staphylococcus epidermidis (strain ATCC 35984 / DSM 28319 / BCRC 17069 / CCUG 31568 / BM 3577 / RP62A) protein is Serine protease HtrA-like.